The primary structure comprises 408 residues: Metacaspase-1B (408 aa).

Positions 1–98 (MYHRHSAPPP…PPLEAQQFGN (98 aa)) are disordered. Pro residues-rich tracts occupy residues 24-49 (WPPP…FPPP) and 56-66 (SPYPTPPPHSP). Residues H199 and C255 contribute to the active site.

This sequence belongs to the peptidase C14B family.

In terms of biological role, involved in cell death (apoptosis). Required for the apoptotic-like loss of membrane phospholipid asymmetry at stationary phase and facilitates growth under conditions of endoplasmic reticulum stress. The chain is Metacaspase-1B (casB) from Aspergillus fumigatus (strain CBS 144.89 / FGSC A1163 / CEA10) (Neosartorya fumigata).